Reading from the N-terminus, the 359-residue chain is Spermine synthase (359 aa).

One can recognise a PABS domain in the interval 53–304 (SGWFSEPHPR…GVIGFVLCST (252 aa)). Gln99 serves as a coordination point for S-adenosyl 3-(methylsulfanyl)propylamine. Tyr129 serves as a coordination point for spermidine. Residue Gln130 participates in S-adenosyl 3-(methylsulfanyl)propylamine binding. Asp154 lines the spermidine pocket. S-adenosyl 3-(methylsulfanyl)propylamine is bound by residues Glu174 and 205-206 (DA). Asp224 functions as the Proton acceptor in the catalytic mechanism. Tyr292 lines the putrescine pocket.

The protein belongs to the spermidine/spermine synthase family. In terms of assembly, heterodimer. Component of a multiprotein complex. Interacts with SPDSYN1 and SPDSYN2. In terms of tissue distribution, expressed predominantly in stem internodes, flower buds and roots.

The enzyme catalyses S-adenosyl 3-(methylsulfanyl)propylamine + spermidine = spermine + S-methyl-5'-thioadenosine + H(+). It functions in the pathway amine and polyamine biosynthesis; spermine biosynthesis; spermine from spermidine: step 1/1. The sequence is that of Spermine synthase (SPMS) from Arabidopsis thaliana (Mouse-ear cress).